A 641-amino-acid polypeptide reads, in one-letter code: Probable licABCH operon regulator (641 aa).

2 consecutive PRD domains span residues 184–289 (ILPK…TQSQ) and 296–403 (SIEE…KKTE). 4 positions are modified to phosphohistidine; by HPr: histidine 219, histidine 278, histidine 333, and histidine 392. Residues 407 to 498 (KRCIIVCASG…ILSDEKEKAN (92 aa)) enclose the PTS EIIB type-2 domain. Phosphocysteine; by EIIA is present on cysteine 413. Residues 499–638 (RYLKKELVFF…QELSDVFDQK (140 aa)) enclose the PTS EIIA type-2 domain. Histidine 559 is subject to Phosphohistidine; by EIIB.

Belongs to the transcriptional antiterminator BglG family.

The regulatory activity of LicR is modulated by phosphorylation and dephosphorylation of the various LicR domains. It becomes activated via phosphoryl group transfer from PEP, EI and HPr on the two conserved histidine residues in the PRD 2 domain, whereas phosphorylation of the EIIA-like domain on His-559 by the PTS EIIB component LicB inactivates LicR. In terms of biological role, positive regulator of the licABCH operon. In Bacillus subtilis (strain 168), this protein is Probable licABCH operon regulator (licR).